The following is a 167-amino-acid chain: SsrA-binding protein (167 aa).

Belongs to the SmpB family.

It is found in the cytoplasm. In terms of biological role, required for rescue of stalled ribosomes mediated by trans-translation. Binds to transfer-messenger RNA (tmRNA), required for stable association of tmRNA with ribosomes. tmRNA and SmpB together mimic tRNA shape, replacing the anticodon stem-loop with SmpB. tmRNA is encoded by the ssrA gene; the 2 termini fold to resemble tRNA(Ala) and it encodes a 'tag peptide', a short internal open reading frame. During trans-translation Ala-aminoacylated tmRNA acts like a tRNA, entering the A-site of stalled ribosomes, displacing the stalled mRNA. The ribosome then switches to translate the ORF on the tmRNA; the nascent peptide is terminated with the 'tag peptide' encoded by the tmRNA and targeted for degradation. The ribosome is freed to recommence translation, which seems to be the essential function of trans-translation. This Stenotrophomonas maltophilia (strain R551-3) protein is SsrA-binding protein.